The sequence spans 178 residues: MELMGSSYDGDYNNGRMEGTGEYTIPTHTRYVGEMKDGMFHGKGVLHFPNGSKYEGTWEKGICKEGKYTFSDGLKYKETDWDYCDGKDRRFYSERCNGLKPAGESQLTDPDPPRVIPDGCYDTGDGFYDPNTRVVKGYDGNFLRNADDQEHEWIVLSCRKSLDEFTGYCPRASTLEEK.

3 MORN repeats span residues 8–30 (YDGDYNNGRMEGTGEYTIPTHTR), 31–53 (YVGEMKDGMFHGKGVLHFPNGSK), and 54–75 (YEGTWEKGICKEGKYTFSDGLK).

Its subcellular location is the cell projection. It localises to the cilium. The protein resides in the flagellum. The polypeptide is MORN repeat-containing protein 5 (morn5) (Danio rerio (Zebrafish)).